The sequence spans 27 residues: Trichocyst matrix protein T4-C (27 aa).

It belongs to the TMP family.

The protein resides in the trichocyst. Structural protein that crystallize inside the trichocyst matrix. In Paramecium tetraurelia, this protein is Trichocyst matrix protein T4-C (T4C).